The sequence spans 284 residues: MLRVAVPNKGTLSEPATEILAEAGYRRRTDSKDLTVIDPVNQVEFFFLRPKDIAIYVGSGELDFGITGRDLVGDSDAPVRERLALGFGSSSFRYAGPAGRDWKIADLAGKRIATAYPNLVRKDLAERGIEATVIRLDGAVEISVQLGVADAIADVVGSGRTLSLHNLVAFGEPLCDSEAVLIESDRGGQDDTQAARDQLVARIQGVVFGQQYLMLDYDCPRAVLDKATAITPGLESPTIAPLADADWVAIRALVPRRGVNEIMDELAAIGAKAILASDIRFCRF.

Belongs to the ATP phosphoribosyltransferase family. Long subfamily. As to quaternary structure, equilibrium between an active dimeric form, an inactive hexameric form and higher aggregates. Interconversion between the various forms is largely reversible and is influenced by the natural substrates and inhibitors of the enzyme. Mg(2+) serves as cofactor.

It is found in the cytoplasm. It carries out the reaction 1-(5-phospho-beta-D-ribosyl)-ATP + diphosphate = 5-phospho-alpha-D-ribose 1-diphosphate + ATP. Its pathway is amino-acid biosynthesis; L-histidine biosynthesis; L-histidine from 5-phospho-alpha-D-ribose 1-diphosphate: step 1/9. With respect to regulation, feedback inhibited by histidine. Catalyzes the condensation of ATP and 5-phosphoribose 1-diphosphate to form N'-(5'-phosphoribosyl)-ATP (PR-ATP). Has a crucial role in the pathway because the rate of histidine biosynthesis seems to be controlled primarily by regulation of HisG enzymatic activity. This chain is ATP phosphoribosyltransferase, found in Mycobacterium avium (strain 104).